The chain runs to 250 residues: Peptidyl-tRNA hydrolase (250 aa).

Residue Y14 coordinates tRNA. H19 acts as the Proton acceptor in catalysis. 3 residues coordinate tRNA: F64, N66, and N112. The segment at 192–250 (MGDGNQRPGGVKTDPAQLEKAPPKAQSHIRQARQNQKKPNIPESGPMAEMLKKLLGKKD) is disordered. Residues 219–229 (HIRQARQNQKK) are compositionally biased toward polar residues. Residues 241–250 (MLKKLLGKKD) are compositionally biased toward basic and acidic residues.

This sequence belongs to the PTH family. Monomer.

The protein localises to the cytoplasm. It catalyses the reaction an N-acyl-L-alpha-aminoacyl-tRNA + H2O = an N-acyl-L-amino acid + a tRNA + H(+). Functionally, hydrolyzes ribosome-free peptidyl-tRNAs (with 1 or more amino acids incorporated), which drop off the ribosome during protein synthesis, or as a result of ribosome stalling. Catalyzes the release of premature peptidyl moieties from peptidyl-tRNA molecules trapped in stalled 50S ribosomal subunits, and thus maintains levels of free tRNAs and 50S ribosomes. The chain is Peptidyl-tRNA hydrolase from Brucella canis (strain ATCC 23365 / NCTC 10854 / RM-666).